A 315-amino-acid chain; its full sequence is Porphobilinogen deaminase (315 aa).

Residue cysteine 242 is modified to S-(dipyrrolylmethanemethyl)cysteine.

The protein belongs to the HMBS family. As to quaternary structure, monomer. Dipyrromethane serves as cofactor.

The catalysed reaction is 4 porphobilinogen + H2O = hydroxymethylbilane + 4 NH4(+). The protein operates within porphyrin-containing compound metabolism; protoporphyrin-IX biosynthesis; coproporphyrinogen-III from 5-aminolevulinate: step 2/4. In terms of biological role, tetrapolymerization of the monopyrrole PBG into the hydroxymethylbilane pre-uroporphyrinogen in several discrete steps. In Syntrophotalea carbinolica (strain DSM 2380 / NBRC 103641 / GraBd1) (Pelobacter carbinolicus), this protein is Porphobilinogen deaminase.